The following is a 152-amino-acid chain: Biogenesis of lysosome-related organelles complex 1 subunit 1 (152 aa).

It belongs to the BLOC1S1 family. In terms of assembly, component of the biogenesis of lysosome-related organelles complex-1 (BLOC-1). Interacts with BLOS2 and SNX1. As to expression, expressed in the whole plant (at protein level).

The protein localises to the cytoplasm. Its subcellular location is the endosome. In terms of biological role, component of the biogenesis of lysosome-related organelles complex-1 (BLOC-1), a complex that mediates the vacuolar degradative transport via the intracellular vesicle trafficking from the endosome to the vacuole. Probably regulates the PIN1 and PIN2 homeostasis through its interaction with SNX1. The polypeptide is Biogenesis of lysosome-related organelles complex 1 subunit 1 (BLOS1) (Arabidopsis thaliana (Mouse-ear cress)).